We begin with the raw amino-acid sequence, 544 residues long: MTKFIFVTGGVVSSLGKGIAAASIAAILESRGLNVTMLKLDPYINVDPGTMSPFQHGEVFVTDDGAETDLDLGHYERFIDSTMTRRNSFSTGQVYENVIAKERRGDYLGGTVQVIPHITDEIKRRIHEGAAGYDVAIVEIGGTVGDIESLPFLEAIRQMRSQLGRNNTLFAHLSYVPYIAAAGEIKTKPTQHTVKEMLSIGLQPDILICRMDRTMPADERRKIALFCNVEERAIVGSYDVDSIYECPEMLHDQGIDNIITEQLQLNVQQADLTAWKKIVHAIQNPKHTVKIAMVGKYVDLTESYKSLIEALKHAGIHTETDVQITFVDSESIEKNNGDVSMLKDMDAILVPGGFGSRGVEGKIAAVRYARENNVPYLGICLGMQIALIEYARDVAGLKGANSTEFDLKCAAPVVALIDEWQTADGSVETRDESADLGGTMRLGAQEVELKAGSLAAKIYGSGHIRERHRHRYEVNNNYVPQLEKAGLVIGGVSAGRERLVETIELPNHPWFFACQFHPEFTSNPRKGHPLFTAFVKAALNNKKA.

The amidoligase domain stretch occupies residues 1–265 (MTKFIFVTGG…DNIITEQLQL (265 aa)). Ser-13 provides a ligand contact to CTP. Ser-13 serves as a coordination point for UTP. Residues 14–19 (SLGKGI) and Asp-71 each bind ATP. Residues Asp-71 and Glu-139 each coordinate Mg(2+). CTP is bound by residues 146 to 148 (DIE), 186 to 191 (KTKPTQ), and Lys-222. UTP-binding positions include 186–191 (KTKPTQ) and Lys-222. The Glutamine amidotransferase type-1 domain occupies 290–544 (KIAMVGKYVD…VKAALNNKKA (255 aa)). Gly-353 contacts L-glutamine. The active-site Nucleophile; for glutamine hydrolysis is Cys-380. L-glutamine-binding positions include 381–384 (LGMQ), Glu-404, and Arg-471. Active-site residues include His-517 and Glu-519.

Belongs to the CTP synthase family. In terms of assembly, homotetramer.

The enzyme catalyses UTP + L-glutamine + ATP + H2O = CTP + L-glutamate + ADP + phosphate + 2 H(+). It catalyses the reaction L-glutamine + H2O = L-glutamate + NH4(+). The catalysed reaction is UTP + NH4(+) + ATP = CTP + ADP + phosphate + 2 H(+). It participates in pyrimidine metabolism; CTP biosynthesis via de novo pathway; CTP from UDP: step 2/2. Allosterically activated by GTP, when glutamine is the substrate; GTP has no effect on the reaction when ammonia is the substrate. The allosteric effector GTP functions by stabilizing the protein conformation that binds the tetrahedral intermediate(s) formed during glutamine hydrolysis. Inhibited by the product CTP, via allosteric rather than competitive inhibition. Its function is as follows. Catalyzes the ATP-dependent amination of UTP to CTP with either L-glutamine or ammonia as the source of nitrogen. Regulates intracellular CTP levels through interactions with the four ribonucleotide triphosphates. The protein is CTP synthase of Neisseria meningitidis serogroup C (strain 053442).